A 193-amino-acid polypeptide reads, in one-letter code: ATP-dependent Clp protease proteolytic subunit 1 (193 aa).

Catalysis depends on S98, which acts as the Nucleophile. Residue H123 is part of the active site.

Belongs to the peptidase S14 family. In terms of assembly, fourteen ClpP subunits assemble into 2 heptameric rings which stack back to back to give a disk-like structure with a central cavity, resembling the structure of eukaryotic proteasomes.

Its subcellular location is the cytoplasm. It carries out the reaction Hydrolysis of proteins to small peptides in the presence of ATP and magnesium. alpha-casein is the usual test substrate. In the absence of ATP, only oligopeptides shorter than five residues are hydrolyzed (such as succinyl-Leu-Tyr-|-NHMec, and Leu-Tyr-Leu-|-Tyr-Trp, in which cleavage of the -Tyr-|-Leu- and -Tyr-|-Trp bonds also occurs).. Functionally, cleaves peptides in various proteins in a process that requires ATP hydrolysis. Has a chymotrypsin-like activity. Plays a major role in the degradation of misfolded proteins. This chain is ATP-dependent Clp protease proteolytic subunit 1, found in Bacillus anthracis.